A 380-amino-acid polypeptide reads, in one-letter code: Palmitoyltransferase ZDHHC20 (380 aa).

The Cytoplasmic segment spans residues Met1 to Val14. A helical transmembrane segment spans residues Gly15–Val35. Residues Glu36 to Val53 lie on the Lumenal side of the membrane. Residues Tyr54–Phe74 form a helical membrane-spanning segment. Topologically, residues Thr75 to Lys169 are cytoplasmic. Residues Arg126–Leu176 enclose the DHHC domain. 2 residues coordinate Zn(2+): Cys128 and Cys131. Substrate-binding positions include Lys135 and His140 to Ser143. Residues His141, Cys142, Cys145, Cys148, and His155 each coordinate Zn(2+). Cys156 acts as the S-palmitoyl cysteine intermediate in catalysis. Cys162 serves as a coordination point for Zn(2+). The chain crosses the membrane as a helical span at residues Phe170–Leu190. Residues Glu191–Lys222 lie on the Lumenal side of the membrane. The chain crosses the membrane as a helical span at residues Phe223–His246. At Cys247–Asn380 the chain is on the cytoplasmic side. A phosphoserine mark is found at Ser320, Ser345, and Ser354.

It belongs to the DHHC palmitoyltransferase family. Post-translationally, autopalmitoylated (in vitro). As to expression, highest levels in lung.

The protein resides in the golgi apparatus membrane. The protein localises to the cell membrane. It is found in the cytoplasm. Its subcellular location is the perinuclear region. It localises to the endoplasmic reticulum membrane. The protein resides in the endoplasmic reticulum-Golgi intermediate compartment membrane. It catalyses the reaction L-cysteinyl-[protein] + hexadecanoyl-CoA = S-hexadecanoyl-L-cysteinyl-[protein] + CoA. It carries out the reaction L-cysteinyl-[protein] + tetradecanoyl-CoA = S-tetradecanoyl-L-cysteinyl-[protein] + CoA. The enzyme catalyses L-cysteinyl-[protein] + octadecanoyl-CoA = S-octadecanoyl-L-cysteinyl-[protein] + CoA. Palmitoyltransferase that could catalyze the addition of palmitate onto various protein substrates. Catalyzes palmitoylation of Cys residues in the cytoplasmic C-terminus of EGFR, and modulates the duration of EGFR signaling by modulating palmitoylation-dependent EGFR internalization and degradation. Has a preference for acyl-CoA with C16 fatty acid chains. Can also utilize acyl-CoA with C14 and C18 fatty acid chains. May palmitoylate CALHM1 subunit of gustatory voltage-gated ion channels and modulate channel gating and kinetics. The sequence is that of Palmitoyltransferase ZDHHC20 from Mus musculus (Mouse).